Reading from the N-terminus, the 329-residue chain is Phenylalanine--tRNA ligase alpha subunit (329 aa).

Position 246 (E246) interacts with Mg(2+).

The protein belongs to the class-II aminoacyl-tRNA synthetase family. Phe-tRNA synthetase alpha subunit type 1 subfamily. As to quaternary structure, tetramer of two alpha and two beta subunits. Mg(2+) is required as a cofactor.

The protein resides in the cytoplasm. It catalyses the reaction tRNA(Phe) + L-phenylalanine + ATP = L-phenylalanyl-tRNA(Phe) + AMP + diphosphate + H(+). The protein is Phenylalanine--tRNA ligase alpha subunit of Helicobacter hepaticus (strain ATCC 51449 / 3B1).